Here is a 364-residue protein sequence, read N- to C-terminus: 4-hydroxythreonine-4-phosphate dehydrogenase (364 aa).

Substrate contacts are provided by His148 and Thr149. The a divalent metal cation site is built by His177, His216, and His301. Substrate contacts are provided by Lys309, Asn318, and Arg327.

It belongs to the PdxA family. In terms of assembly, homodimer. Zn(2+) is required as a cofactor. The cofactor is Mg(2+). Requires Co(2+) as cofactor.

The protein localises to the cytoplasm. The enzyme catalyses 4-(phosphooxy)-L-threonine + NAD(+) = 3-amino-2-oxopropyl phosphate + CO2 + NADH. It participates in cofactor biosynthesis; pyridoxine 5'-phosphate biosynthesis; pyridoxine 5'-phosphate from D-erythrose 4-phosphate: step 4/5. In terms of biological role, catalyzes the NAD(P)-dependent oxidation of 4-(phosphooxy)-L-threonine (HTP) into 2-amino-3-oxo-4-(phosphooxy)butyric acid which spontaneously decarboxylates to form 3-amino-2-oxopropyl phosphate (AHAP). The chain is 4-hydroxythreonine-4-phosphate dehydrogenase from Campylobacter jejuni (strain RM1221).